We begin with the raw amino-acid sequence, 184 residues long: Adenine phosphoribosyltransferase (184 aa).

The protein belongs to the purine/pyrimidine phosphoribosyltransferase family. In terms of assembly, homodimer.

It localises to the cytoplasm. It catalyses the reaction AMP + diphosphate = 5-phospho-alpha-D-ribose 1-diphosphate + adenine. It functions in the pathway purine metabolism; AMP biosynthesis via salvage pathway; AMP from adenine: step 1/1. Catalyzes a salvage reaction resulting in the formation of AMP, that is energically less costly than de novo synthesis. This chain is Adenine phosphoribosyltransferase, found in Blochmanniella pennsylvanica (strain BPEN).